The primary structure comprises 928 residues: Mating-type protein A-alpha Y4 (928 aa).

Residues Gly152–Leu211 constitute a DNA-binding region (homeobox). Disordered regions lie at residues Lys255 to Pro296, Asp310 to Asn329, Thr340 to Pro359, Tyr406 to Ser451, and Ala626 to Leu736. The span at Glu344–Pro353 shows a compositional bias: basic residues. Residues Lys635–Arg657 are compositionally biased toward basic and acidic residues. Composition is skewed to low complexity over residues Ser668–Arg682 and Glu694–Gly728.

The protein resides in the nucleus. In terms of biological role, specifies A-alpha-4 mating-type. May regulate the expression of genes specific to the homokaryotic cell type. This is Mating-type protein A-alpha Y4 from Schizophyllum commune (Split gill fungus).